A 138-amino-acid polypeptide reads, in one-letter code: Large ribosomal subunit protein uL16 (138 aa).

The disordered stretch occupies residues 1-29 (MSLLQPRKVKWRKPQKGRTKGKATRRNQV). The span at 7-25 (RKVKWRKPQKGRTKGKATR) shows a compositional bias: basic residues.

This sequence belongs to the universal ribosomal protein uL16 family. Part of the 50S ribosomal subunit.

Its function is as follows. Binds 23S rRNA and is also seen to make contacts with the A and possibly P site tRNAs. This chain is Large ribosomal subunit protein uL16, found in Sulfurihydrogenibium sp. (strain YO3AOP1).